The primary structure comprises 303 residues: Small ribosomal subunit protein bS1m (303 aa).

An N-acetylserine modification is found at Ser2. The N-terminal 12 residues, 2 to 13 (SFAQILRGSRAM), are a transit peptide targeting the mitochondrion; not cleaved.

It belongs to the bacterial ribosomal protein bS1 family. Component of the mitochondrial small ribosomal subunit (mt-SSU). Mature yeast 74S mitochondrial ribosomes consist of a small (37S) and a large (54S) subunit. The 37S small subunit contains a 15S ribosomal RNA (15S mt-rRNA) and at least 32 different proteins. The 54S large subunit contains a 21S rRNA (21S mt-rRNA) and at least 45 different proteins. This subunit is mutually exclusive with mug178/small ribosomal subunit protein L51-b.

It localises to the mitochondrion. Its function is as follows. Component of the mitochondrial ribosome (mitoribosome), a dedicated translation machinery responsible for the synthesis of mitochondrial genome-encoded proteins, including at least some of the essential transmembrane subunits of the mitochondrial respiratory chain. The mitoribosomes are attached to the mitochondrial inner membrane and translation products are cotranslationally integrated into the membrane. bS1m functionally interacts with the 5'-UTR of mitochondrial mRNAs. Plays an essential role in mitochondrial translation. The chain is Small ribosomal subunit protein bS1m (mrp51) from Schizosaccharomyces pombe (strain 972 / ATCC 24843) (Fission yeast).